A 190-amino-acid polypeptide reads, in one-letter code: dCTP deaminase (190 aa).

Position 113-118 (113-118 (KSTYAR)) interacts with dCTP. Residue Glu139 is the Proton donor/acceptor of the active site. Positions 158, 172, 181, and 182 each coordinate dCTP.

Belongs to the dCTP deaminase family. As to quaternary structure, homotrimer.

The enzyme catalyses dCTP + H2O + H(+) = dUTP + NH4(+). The protein operates within pyrimidine metabolism; dUMP biosynthesis; dUMP from dCTP (dUTP route): step 1/2. Its function is as follows. Catalyzes the deamination of dCTP to dUTP. This Chlamydia muridarum (strain MoPn / Nigg) protein is dCTP deaminase.